The sequence spans 324 residues: Transmembrane protein 171 (324 aa).

4 helical membrane-spanning segments follow: residues 22–42 (IFCFFVFGAVLLCVGVLLSIF), 57–77 (MVLKVAGPACAVVGLGAVILA), 113–133 (LIFGFLFLTSGMLISVLGIWV), and 160–180 (FLSLQIMGPLIVLVGLCFFVV). Low complexity predominate over residues 229–239 (PESSASAVAES). Disordered regions lie at residues 229 to 248 (PESSASAVAESPGTNSLLPN) and 279 to 304 (YTISGTNSSSEASHTPHLPSELPPRY). Polar residues predominate over residues 279-291 (YTISGTNSSSEAS).

The protein resides in the membrane. The sequence is that of Transmembrane protein 171 (TMEM171) from Homo sapiens (Human).